The sequence spans 239 residues: uncharacterized protein (239 aa).

A dksA C4-type; degenerate zinc finger spans residues 94–114 (CEVSGKEIPFERLEALPTATT). Residues 133–158 (ETPFGQFEFDDDEEIRAPYDSEDSYQ) show a composition bias toward acidic residues. The interval 133-182 (ETPFGQFEFDDDEEIRAPYDSEDSYQDVEKYGNSQTPQDMENPPLSYDDM) is disordered.

This is an uncharacterized protein from Bacillus subtilis (strain 168).